We begin with the raw amino-acid sequence, 140 residues long: Large ribosomal subunit protein uL11 (140 aa).

It belongs to the universal ribosomal protein uL11 family. In terms of assembly, part of the ribosomal stalk of the 50S ribosomal subunit. Interacts with L10 and the large rRNA to form the base of the stalk. L10 forms an elongated spine to which L12 dimers bind in a sequential fashion forming a multimeric L10(L12)X complex. Post-translationally, one or more lysine residues are methylated.

Its function is as follows. Forms part of the ribosomal stalk which helps the ribosome interact with GTP-bound translation factors. This chain is Large ribosomal subunit protein uL11, found in Desulfovibrio desulfuricans (strain ATCC 27774 / DSM 6949 / MB).